Here is a 586-residue protein sequence, read N- to C-terminus: Asparagine synthetase [glutamine-hydrolyzing] 1 (586 aa).

The active-site For GATase activity is C2. One can recognise a Glutamine amidotransferase type-2 domain in the interval 2 to 185; it reads CGILAVLGCS…PGHLYSSRER (184 aa). Residues 50–54, 75–77, and D98 contribute to the L-glutamine site; these read RLAIV and NGE. In terms of domain architecture, Asparagine synthetase spans 193-516; that stretch reads PTWFSESIPS…PQNSARLTVP (324 aa). Residues L231, V267, and 341-342 each bind ATP; that span reads SG.

It carries out the reaction L-aspartate + L-glutamine + ATP + H2O = L-asparagine + L-glutamate + AMP + diphosphate + H(+). The protein operates within amino-acid biosynthesis; L-asparagine biosynthesis; L-asparagine from L-aspartate (L-Gln route): step 1/1. In Lotus japonicus (Lotus corniculatus var. japonicus), this protein is Asparagine synthetase [glutamine-hydrolyzing] 1 (AS1).